The following is a 390-amino-acid chain: Tuftelin (390 aa).

Coiled-coil stretches lie at residues 88 to 126 (DKMT…KLDR) and 163 to 352 (PSMS…EKQV). A disordered region spans residues 356–383 (NFSTQARAKTENLGSVRISKPPSPKPMP).

It belongs to the tuftelin family. Interacts with TFIP11. May form oligomers. As to expression, ameloblasts, and also non-odontogenic tissues including kidney, lung, liver and testis.

It is found in the secreted. Its function is as follows. Involved in the structural organization of the epidermis. Involved in the mineralization and structural organization of enamel. The protein is Tuftelin (Tuft1) of Mus musculus (Mouse).